The sequence spans 446 residues: Bifunctional protein GlmU (446 aa).

The interval methionine 1–arginine 225 is pyrophosphorylase. Residues leucine 6–glycine 9, lysine 20, glutamine 70, and glycine 75–threonine 76 contribute to the UDP-N-acetyl-alpha-D-glucosamine site. Mg(2+) is bound at residue aspartate 98. UDP-N-acetyl-alpha-D-glucosamine is bound by residues glycine 135, glutamate 150, asparagine 165, and asparagine 223. Residue asparagine 223 coordinates Mg(2+). The tract at residues valine 226–glutamate 246 is linker. The segment at glycine 247–lysine 446 is N-acetyltransferase. Residues arginine 328 and lysine 346 each contribute to the UDP-N-acetyl-alpha-D-glucosamine site. Catalysis depends on histidine 358, which acts as the Proton acceptor. Residues tyrosine 361 and asparagine 372 each coordinate UDP-N-acetyl-alpha-D-glucosamine. Residues alanine 375, asparagine 381–tyrosine 382, serine 400, alanine 418, and arginine 435 contribute to the acetyl-CoA site.

In the N-terminal section; belongs to the N-acetylglucosamine-1-phosphate uridyltransferase family. This sequence in the C-terminal section; belongs to the transferase hexapeptide repeat family. In terms of assembly, homotrimer. It depends on Mg(2+) as a cofactor.

It is found in the cytoplasm. It catalyses the reaction alpha-D-glucosamine 1-phosphate + acetyl-CoA = N-acetyl-alpha-D-glucosamine 1-phosphate + CoA + H(+). The enzyme catalyses N-acetyl-alpha-D-glucosamine 1-phosphate + UTP + H(+) = UDP-N-acetyl-alpha-D-glucosamine + diphosphate. Its pathway is nucleotide-sugar biosynthesis; UDP-N-acetyl-alpha-D-glucosamine biosynthesis; N-acetyl-alpha-D-glucosamine 1-phosphate from alpha-D-glucosamine 6-phosphate (route II): step 2/2. It participates in nucleotide-sugar biosynthesis; UDP-N-acetyl-alpha-D-glucosamine biosynthesis; UDP-N-acetyl-alpha-D-glucosamine from N-acetyl-alpha-D-glucosamine 1-phosphate: step 1/1. The protein operates within bacterial outer membrane biogenesis; LPS lipid A biosynthesis. Functionally, catalyzes the last two sequential reactions in the de novo biosynthetic pathway for UDP-N-acetylglucosamine (UDP-GlcNAc). The C-terminal domain catalyzes the transfer of acetyl group from acetyl coenzyme A to glucosamine-1-phosphate (GlcN-1-P) to produce N-acetylglucosamine-1-phosphate (GlcNAc-1-P), which is converted into UDP-GlcNAc by the transfer of uridine 5-monophosphate (from uridine 5-triphosphate), a reaction catalyzed by the N-terminal domain. The chain is Bifunctional protein GlmU from Carboxydothermus hydrogenoformans (strain ATCC BAA-161 / DSM 6008 / Z-2901).